The chain runs to 991 residues: Pentatricopeptide repeat-containing protein At1g73710 (991 aa).

2 disordered regions span residues 1–27 and 61–81; these read MLQP…HHHH and SSSS…RKRK. A compositionally biased stretch (basic residues) spans 15-27; sequence VRHHHHHHHHHHH. Residues 61–73 show a composition bias toward low complexity; it reads SSSSVSPPRCSKP. PPR repeat units lie at residues 144–178, 179–213, 214–248, 304–338, 339–373, 374–408, 409–443, 444–474, 478–513, 514–548, 549–583, 584–618, 619–653, 654–688, 689–719, 723–757, 758–792, 862–896, and 897–931; these read NVIH…GVLP, TNNT…MHFP, DEVT…KVDL, LTST…GVPI, DTVT…GISP, DTKT…GLFP, DTVT…SIRI, DEHS…FQLD, SSTT…GQRN, DVLE…GTWP, DECT…GCKP, GCKT…GVKP, NEVV…GVQS, NHIV…EGGP, DVAA…LREK, DVIS…GLLS, DCTS…RKLL, EHFA…GLEP, and DIVT…ELEP. The span at 965-974 shows a compositional bias: basic and acidic residues; it reads AERECSSRSG. The segment at 965 to 991 is disordered; it reads AERECSSRSGEEEEDDEEENSEEDEAF. The segment covering 975–991 has biased composition (acidic residues); sequence EEEEDDEEENSEEDEAF.

It belongs to the PPR family. P subfamily.

The protein is Pentatricopeptide repeat-containing protein At1g73710 of Arabidopsis thaliana (Mouse-ear cress).